The chain runs to 86 residues: Putative membrane protein insertion efficiency factor (86 aa).

Belongs to the UPF0161 family.

It localises to the cell membrane. In terms of biological role, could be involved in insertion of integral membrane proteins into the membrane. The sequence is that of Putative membrane protein insertion efficiency factor from Streptococcus pyogenes serotype M1.